Here is a 70-residue protein sequence, read N- to C-terminus: DNA-directed RNA polymerase subunit omega (70 aa).

This sequence belongs to the RNA polymerase subunit omega family. In terms of assembly, the RNAP catalytic core consists of 2 alpha, 1 beta, 1 beta' and 1 omega subunit. When a sigma factor is associated with the core the holoenzyme is formed, which can initiate transcription.

It carries out the reaction RNA(n) + a ribonucleoside 5'-triphosphate = RNA(n+1) + diphosphate. In terms of biological role, promotes RNA polymerase assembly. Latches the N- and C-terminal regions of the beta' subunit thereby facilitating its interaction with the beta and alpha subunits. This Staphylococcus epidermidis (strain ATCC 35984 / DSM 28319 / BCRC 17069 / CCUG 31568 / BM 3577 / RP62A) protein is DNA-directed RNA polymerase subunit omega.